A 391-amino-acid chain; its full sequence is Phosphoprotein (391 aa).

Phosphothreonine is present on residues Thr10, Thr16, and Thr39. Residue Ser69 is modified to Phosphoserine. Disordered stretches follow at residues 82 to 101 and 143 to 208; these read SSSE…FAQT and PRTS…PANV. Phosphothreonine occurs at positions 91, 150, and 165. The residue at position 188 (Ser188) is a Phosphoserine. The span at 198-208 shows a compositional bias: polar residues; that stretch reads LPQQDSTPANV. A coiled-coil region spans residues 218 to 245; sequence ANEIMDLLRGMDARLQHLEQKVDKVLAQ. Thr250 carries the phosphothreonine modification. Ser257 carries the post-translational modification Phosphoserine. Thr258 and Thr282 each carry phosphothreonine. Phosphoserine is present on residues Ser292 and Ser294. Thr298 bears the Phosphothreonine mark. Ser301 and Ser374 each carry phosphoserine. The interaction with the nucleoprotein stretch occupies residues 343–391; the sequence is AGRKVMITKMITDCVANPQMKQAFEQRLAKASTEDALNDIKRDIIRSAI. The tract at residues 348–391 is x domain (XD); sequence MITKMITDCVANPQMKQAFEQRLAKASTEDALNDIKRDIIRSAI. Thr375 bears the Phosphothreonine mark.

Belongs to the rubulavirus/avulavirus P protein family. As to quaternary structure, homotetramer. Interacts (via multimerization domain) with polymerase L; this interaction forms the polymerase L-P complex. Interacts (via N-terminus) with N0 (via Ncore); this interaction allows P to chaperon N0 to avoid N polymerization before encapsidation. Interacts (via C-terminus) with N-RNA template; this interaction positions the polymerase on the template for both transcription and replication. Interacts with host RPS6KB1 kinase; this interaction may play a role in the viral replication and transcription.

It is found in the virion. Essential cofactor of the RNA polymerase L that plays a central role in the transcription and replication by forming the polymerase complex with RNA polymerase L and recruiting L to the genomic N-RNA template for RNA synthesis. Also plays a central role in the encapsidation of nascent RNA chains by forming the encapsidation complex with the nucleocapsid protein N (N-P complex). Acts as a chaperone for newly synthesized free N protein, so-called N0, allowing encapsidation of nascent RNA chains during replication. The nucleoprotein protein N prevents excessive phosphorylation of P, which leads to down-regulation of viral transcription/ replication. Participates, together with N, in the formation of viral factories (viroplasms), which are large inclusions in the host cytoplasm where replication takes place. The polypeptide is Phosphoprotein (V/P) (Mumps orthorubulavirus (MuV)).